Reading from the N-terminus, the 277-residue chain is Protein OPG166 (277 aa).

Residues N29 and N58 are each glycosylated (N-linked (GlcNAc...) asparagine; by host). Helical transmembrane passes span 124 to 144 (TMLM…EITY), 156 to 176 (GILQ…AFLF), 186 to 206 (IIGL…KVFS), 219 to 239 (LIIY…GLSL), and 247 to 267 (LLLS…LFLV).

It belongs to the orthopoxvirus OPG166 protein family.

Its subcellular location is the host membrane. Promotes, when overexpressed, the influx of extracellular Ca(2+), leading to membrane permeability and host cell necrosis. The protein is Protein OPG166 (OPG166) of Vaccinia virus (strain Copenhagen) (VACV).